A 359-amino-acid polypeptide reads, in one-letter code: Phospho-N-acetylmuramoyl-pentapeptide-transferase (359 aa).

Residues 1 to 25 (MLYQLALLLKDYWFAFNVLKYITFR) lie on the Periplasmic side of the membrane. The chain crosses the membrane as a helical span at residues 26-48 (SFTAVLIAFFLTLVLSPSFINRL). The Cytoplasmic segment spans residues 49-74 (RKIQRLFGGYVREYTPESHEVKKYTP). 2 residues coordinate muraymycin D2: K70 and T75. Residues 75–92 (TMGGIVILIVVTLSTLLL) form a helical membrane-spanning segment. Topologically, residues 93-98 (MRWDIK) are periplasmic. Residues 99–120 (YTWVVLLSFLSFGTIGFWDDYV) traverse the membrane as a helical segment. Topologically, residues 121-130 (KLKNKKGISI) are cytoplasmic. The helical transmembrane segment at 131 to 152 (KTKFLLQVLSASLISVLIYYWA) threads the bilayer. Topologically, residues 153–172 (DIDTILYFPFFKELYVDLGV) are periplasmic. The helical transmembrane segment at 173–194 (LYLPFAVFVIVGSANAVNLTDG) threads the bilayer. Positions 190, 193, and 196 each coordinate muraymycin D2. At 195 to 197 (LDG) the chain is on the cytoplasmic side. Residues 198-218 (LAIGPAMTTATALGVVAYAVG) form a helical membrane-spanning segment. The Periplasmic portion of the chain corresponds to 219–233 (HSKIAQYLNIPYVPY). The chain crosses the membrane as a helical span at residues 234–255 (AGELTVFCFALVGAGLGFLWFN). The Cytoplasmic segment spans residues 256-264 (SFPAQMFMG). Muraymycin D2-binding residues include G264 and S268. The helical transmembrane segment at 265 to 280 (DVGSLSIGASLATVAL) threads the bilayer. The Periplasmic portion of the chain corresponds to 281-284 (LTKS). The chain crosses the membrane as a helical span at residues 285–310 (EFIFAVAAGVFVFETISVILQIIYFR). Q305 and A321 together coordinate muraymycin D2. The Cytoplasmic portion of the chain corresponds to 311-332 (WTGGKRLFKRAPFHHHLELNGL). Residues 333-355 (PEPKIVVRMWIISILLAIIAISM) form a helical membrane-spanning segment. The Periplasmic segment spans residues 356-359 (LKLR).

This sequence belongs to the glycosyltransferase 4 family. MraY subfamily. As to quaternary structure, homodimer. The cofactor is Mg(2+). It depends on Mn(2+) as a cofactor.

The protein localises to the cell inner membrane. It catalyses the reaction UDP-N-acetyl-alpha-D-muramoyl-L-alanyl-gamma-D-glutamyl-meso-2,6-diaminopimeloyl-D-alanyl-D-alanine + di-trans,octa-cis-undecaprenyl phosphate = di-trans,octa-cis-undecaprenyl diphospho-N-acetyl-alpha-D-muramoyl-L-alanyl-D-glutamyl-meso-2,6-diaminopimeloyl-D-alanyl-D-alanine + UMP. It functions in the pathway cell wall biogenesis; peptidoglycan biosynthesis. With respect to regulation, inhibited by natural nucleoside antibiotics including tunicamycin, capuramycin and muraymycin. Usually the cofactor magnesium is not required for antibiotic binding. In terms of biological role, catalyzes the initial step of the lipid cycle reactions in the biosynthesis of the cell wall peptidoglycan: transfers peptidoglycan precursor phospho-MurNAc-pentapeptide from UDP-MurNAc-pentapeptide onto the lipid carrier undecaprenyl phosphate, yielding undecaprenyl-pyrophosphoryl-MurNAc-pentapeptide, known as lipid I. The sequence is that of Phospho-N-acetylmuramoyl-pentapeptide-transferase from Aquifex aeolicus (strain VF5).